The primary structure comprises 351 residues: Transcriptional activator POG1 (351 aa).

Residues 1–26 (MKQEPHRQSEEKEKPKGPMAVEREQH) are compositionally biased toward basic and acidic residues. Residues 1–56 (MKQEPHRQSEEKEKPKGPMAVEREQHTSLSSGTTVTASTGDESTNSRPVESSQTEK) form a disordered region. A compositionally biased stretch (polar residues) spans 27–56 (TSLSSGTTVTASTGDESTNSRPVESSQTEK). Residues Ser-152 and Ser-168 each carry the phosphoserine modification. Disordered regions lie at residues 234-256 (PGMG…TPVM) and 291-351 (QHQL…PPPT). Residues 241–256 (QLPTMSSNSESQTPVM) show a composition bias toward polar residues. Phosphoserine is present on Ser-314.

The protein belongs to the POG1 family. In terms of processing, phosphorylated by CDC28.

It localises to the nucleus. Functionally, transcriptional activator which promotes cell cycle recovery with CLN2, after pheromone induced G1 arrest, probably inhibiting the ability of STE20 to activate the pheromone response pathway. Binds the promoters of genes that function in cell cycle regulation, cytoskeletal organization, and spindle assembly. May also be involved in stress-resistance. The sequence is that of Transcriptional activator POG1 (POG1) from Saccharomyces cerevisiae (strain ATCC 204508 / S288c) (Baker's yeast).